We begin with the raw amino-acid sequence, 341 residues long: Phosphoribosylformylglycinamidine cyclo-ligase (341 aa).

Belongs to the AIR synthase family.

It is found in the cytoplasm. It carries out the reaction 2-formamido-N(1)-(5-O-phospho-beta-D-ribosyl)acetamidine + ATP = 5-amino-1-(5-phospho-beta-D-ribosyl)imidazole + ADP + phosphate + H(+). Its pathway is purine metabolism; IMP biosynthesis via de novo pathway; 5-amino-1-(5-phospho-D-ribosyl)imidazole from N(2)-formyl-N(1)-(5-phospho-D-ribosyl)glycinamide: step 2/2. The polypeptide is Phosphoribosylformylglycinamidine cyclo-ligase (Agathobacter rectalis (strain ATCC 33656 / DSM 3377 / JCM 17463 / KCTC 5835 / VPI 0990) (Eubacterium rectale)).